The primary structure comprises 913 residues: Eukaryotic translation initiation factor 3 subunit C (913 aa).

The tract at residues 1-44 (MSRFFTTGSDSESESSLSGEELVTKPVGGNYGKQPLLLSEDEED) is disordered. Residues 8–21 (GSDSESESSLSGEE) are compositionally biased toward low complexity. 7 positions are modified to phosphoserine: Ser9, Ser11, Ser13, Ser15, Ser16, Ser18, and Ser39. N6-acetyllysine is present on Lys99. Disordered regions lie at residues 157–301 (TSYK…GGEW) and 522–542 (QLTP…NEGE). A phosphoserine mark is found at Ser166, Ser178, Ser181, and Ser182. Positions 166–190 (SADEDAEKNEEDSEGSSDEDEDEDG) are enriched in acidic residues. Positions 199-216 (KKSEAPSGESRKFLKKMD) are enriched in basic and acidic residues. The segment covering 217–232 (DEDEDSEDSEDDEDWD) has biased composition (acidic residues). A compositionally biased stretch (basic and acidic residues) spans 261 to 278 (PTTDEDKKAAEKKREDKA). A compositionally biased stretch (polar residues) spans 522–531 (QLTPPEGSSK). Thr524 carries the phosphothreonine modification. Lys643 carries the N6-acetyllysine modification. Positions 673–849 (FHLHINLELL…QTVVMHRTEP (177 aa)) constitute a PCI domain. Residues 885–913 (FRDQKDGYRKNEGYMRRGGYRQQQSQTAY) form a disordered region. The span at 886-899 (RDQKDGYRKNEGYM) shows a compositional bias: basic and acidic residues. Ser909 carries the post-translational modification Phosphoserine.

In terms of assembly, component of the eukaryotic translation initiation factor 3 (eIF-3) complex, which is composed of 13 subunits: EIF3A, EIF3B, EIF3C, EIF3D, EIF3E, EIF3F, EIF3G, EIF3H, EIF3I, EIF3J, EIF3K, EIF3L and EIF3M. The eIF-3 complex appears to include 3 stable modules: module A is composed of EIF3A, EIF3B, EIF3G and EIF3I; module B is composed of EIF3F, EIF3H, and EIF3M; and module C is composed of EIF3C, EIF3D, EIF3E, EIF3K and EIF3L. EIF3C of module C binds EIF3B of module A and EIF3H of module B, thereby linking the three modules. EIF3J is a labile subunit that binds to the eIF-3 complex via EIF3B. The eIF-3 complex interacts with RPS6KB1 under conditions of nutrient depletion. Mitogenic stimulation leads to binding and activation of a complex composed of MTOR and RPTOR, leading to phosphorylation and release of RPS6KB1 and binding of EIF4B to eIF-3. Identified in a HCV IRES-mediated translation complex, at least composed of EIF3C, IGF2BP1, RPS3 and HCV RNA-replicon. Interacts with ALKBH4, IFIT1 and IFIT2. Interacts with BZW2/5MP1. In terms of processing, phosphorylated. Phosphorylation is enhanced upon serum stimulation.

It localises to the cytoplasm. Its function is as follows. Component of the eukaryotic translation initiation factor 3 (eIF-3) complex, which is required for several steps in the initiation of protein synthesis. The eIF-3 complex associates with the 40S ribosome and facilitates the recruitment of eIF-1, eIF-1A, eIF-2:GTP:methionyl-tRNAi and eIF-5 to form the 43S pre-initiation complex (43S PIC). The eIF-3 complex stimulates mRNA recruitment to the 43S PIC and scanning of the mRNA for AUG recognition. The eIF-3 complex is also required for disassembly and recycling of post-termination ribosomal complexes and subsequently prevents premature joining of the 40S and 60S ribosomal subunits prior to initiation. The eIF-3 complex specifically targets and initiates translation of a subset of mRNAs involved in cell proliferation, including cell cycling, differentiation and apoptosis, and uses different modes of RNA stem-loop binding to exert either translational activation or repression. In Homo sapiens (Human), this protein is Eukaryotic translation initiation factor 3 subunit C.